We begin with the raw amino-acid sequence, 729 residues long: U-box domain-containing protein 17 (729 aa).

One can recognise a U-box domain in the interval 304–378 (TVPKDFVCPI…VQWCTASGIS (75 aa)). 4 ARM repeats span residues 438–477 (KENR…NLSI), 479–520 (EKNK…SLSA), 523–562 (EYKK…NLST), and 564–601 (PDNC…LLVR).

The enzyme catalyses S-ubiquitinyl-[E2 ubiquitin-conjugating enzyme]-L-cysteine + [acceptor protein]-L-lysine = [E2 ubiquitin-conjugating enzyme]-L-cysteine + N(6)-ubiquitinyl-[acceptor protein]-L-lysine.. It functions in the pathway protein modification; protein ubiquitination. Functionally, functions as an E3 ubiquitin ligase. The chain is U-box domain-containing protein 17 (PUB17) from Arabidopsis thaliana (Mouse-ear cress).